Reading from the N-terminus, the 381-residue chain is Protein YkfC (381 aa).

Residues 72–337 (LRDELLSGHY…DGFIFLGHRL (266 aa)) enclose the Reverse transcriptase domain. 3 residues coordinate Mg(2+): aspartate 166, aspartate 284, and aspartate 285.

It belongs to the bacterial reverse transcriptase family.

The chain is Protein YkfC (ykfC) from Escherichia coli (strain K12).